The sequence spans 409 residues: Secreted LysM effector Blys2 (409 aa).

The N-terminal stretch at 1–20 (MTRFTTTLVAALAGANLAAA) is a signal peptide. Positions 24 to 71 (YKWRAHAGDTCDSLSSDWSVQVSDFIKWNPSVGANCSNGVTAGQEYCV) constitute a LysM 1 domain. Residue Asn58 is glycosylated (N-linked (GlcNAc...) asparagine). A disordered region spans residues 74–111 (NGAGSKPTTPPTGSPTTLTTAVTTASSTPTQPTDGAPS). The span at 87 to 106 (SPTTLTTAVTTASSTPTQPT) shows a compositional bias: low complexity. LysM domains are found at residues 129–176 (AWYK…YVCV), 206–253 (KWYK…FVCV), 283–330 (KFYK…YYCI), and 357–405 (KYYK…YICV).

It belongs to the secreted LysM effector family.

It localises to the secreted. The protein resides in the cell wall. Functionally, secreted effector that enables the plant pathogenic fungus to manipulate host defenses for successful infection. Required for the full virulence to infect insect hosts. In contrast to Blys5, Blys2 is not able to protect fungal hyphae against the hydrolytic activity of chitinase but plays an important role in evasion of insect immunities. Binds chitin. Coats and protects the cell walls of insect pathogens from host cell recognition. The polypeptide is Secreted LysM effector Blys2 (Beauveria bassiana (strain ARSEF 2860) (White muscardine disease fungus)).